The chain runs to 493 residues: tRNA-2-methylthio-N(6)-dimethylallyladenosine synthase (493 aa).

The span at 1–14 (MPMTGLLQTTLSTA) shows a compositional bias: polar residues. The interval 1–31 (MPMTGLLQTTLSTADQDRSGPAATTGDTPAR) is disordered. One can recognise an MTTase N-terminal domain in the interval 35–155 (KRLHVITWGC…LGGMVRRAMN (121 aa)). Residues Cys44, Cys80, Cys118, Cys199, Cys203, and Cys206 each contribute to the [4Fe-4S] cluster site. Positions 185 to 417 (LAGGRTAFLT…QALLRTQQEA (233 aa)) constitute a Radical SAM core domain. The region spanning 420 to 482 (TACIGKTVNV…TNSLSATLPD (63 aa)) is the TRAM domain.

This sequence belongs to the methylthiotransferase family. MiaB subfamily. As to quaternary structure, monomer. [4Fe-4S] cluster serves as cofactor.

Its subcellular location is the cytoplasm. It catalyses the reaction N(6)-dimethylallyladenosine(37) in tRNA + (sulfur carrier)-SH + AH2 + 2 S-adenosyl-L-methionine = 2-methylsulfanyl-N(6)-dimethylallyladenosine(37) in tRNA + (sulfur carrier)-H + 5'-deoxyadenosine + L-methionine + A + S-adenosyl-L-homocysteine + 2 H(+). Its function is as follows. Catalyzes the methylthiolation of N6-(dimethylallyl)adenosine (i(6)A), leading to the formation of 2-methylthio-N6-(dimethylallyl)adenosine (ms(2)i(6)A) at position 37 in tRNAs that read codons beginning with uridine. The chain is tRNA-2-methylthio-N(6)-dimethylallyladenosine synthase from Granulibacter bethesdensis (strain ATCC BAA-1260 / CGDNIH1).